A 473-amino-acid chain; its full sequence is Siroheme synthase 2 (473 aa).

The segment at 1-204 is precorrin-2 dehydrogenase /sirohydrochlorin ferrochelatase; sequence MDYFPIFCQL…NDHVQADQHV (204 aa). Residues 22–23 and 43–44 each bind NAD(+); these read EI and CE. Ser-128 is modified (phosphoserine). The uroporphyrinogen-III C-methyltransferase stretch occupies residues 216-473; it reads GEVVLVGAGP…KVTECVAHVG (258 aa). Pro-225 provides a ligand contact to S-adenosyl-L-methionine. Asp-248 acts as the Proton acceptor in catalysis. The Proton donor role is filled by Lys-270. Residues 301–303, Ile-306, 331–332, Met-382, and Gly-411 each bind S-adenosyl-L-methionine; these read GGD and TA.

This sequence in the N-terminal section; belongs to the precorrin-2 dehydrogenase / sirohydrochlorin ferrochelatase family. The protein in the C-terminal section; belongs to the precorrin methyltransferase family.

It carries out the reaction uroporphyrinogen III + 2 S-adenosyl-L-methionine = precorrin-2 + 2 S-adenosyl-L-homocysteine + H(+). The catalysed reaction is precorrin-2 + NAD(+) = sirohydrochlorin + NADH + 2 H(+). The enzyme catalyses siroheme + 2 H(+) = sirohydrochlorin + Fe(2+). The protein operates within cofactor biosynthesis; adenosylcobalamin biosynthesis; precorrin-2 from uroporphyrinogen III: step 1/1. It participates in cofactor biosynthesis; adenosylcobalamin biosynthesis; sirohydrochlorin from precorrin-2: step 1/1. It functions in the pathway porphyrin-containing compound metabolism; siroheme biosynthesis; precorrin-2 from uroporphyrinogen III: step 1/1. Its pathway is porphyrin-containing compound metabolism; siroheme biosynthesis; siroheme from sirohydrochlorin: step 1/1. The protein operates within porphyrin-containing compound metabolism; siroheme biosynthesis; sirohydrochlorin from precorrin-2: step 1/1. Functionally, multifunctional enzyme that catalyzes the SAM-dependent methylations of uroporphyrinogen III at position C-2 and C-7 to form precorrin-2 via precorrin-1. Then it catalyzes the NAD-dependent ring dehydrogenation of precorrin-2 to yield sirohydrochlorin. Finally, it catalyzes the ferrochelation of sirohydrochlorin to yield siroheme. In Yersinia pseudotuberculosis serotype O:1b (strain IP 31758), this protein is Siroheme synthase 2.